Here is a 172-residue protein sequence, read N- to C-terminus: Type II secretion system protein H (172 aa).

Positions 1 to 6 are cleaved as a propeptide — leader sequence; sequence MRASRG. Phe-7 bears the N-methylphenylalanine mark. Residues 7 to 27 traverse the membrane as a helical segment; the sequence is FTLIELMVVMVIISVLIGLAV.

Belongs to the GSP H family. In terms of assembly, type II secretion is composed of four main components: the outer membrane complex, the inner membrane complex, the cytoplasmic secretion ATPase and the periplasm-spanning pseudopilus. Forms the tip of the type II pseudopilus by interacting with XcpV, XcpW and XcpX. Interacts with core component XcpT. Cleaved by prepilin peptidase. Post-translationally, methylated by prepilin peptidase at the amino group of the N-terminal phenylalanine once the leader sequence is cleaved by prepilin peptidase.

Its subcellular location is the cell inner membrane. Its function is as follows. Component of the type II secretion system required for the energy-dependent secretion of extracellular factors such as proteases and toxins from the periplasm. Part of the pseudopilus tip complex that is critical for the recognition and binding of secretion substrates. Type II pseudopilus confers increased bacterial adhesive capabilities. The sequence is that of Type II secretion system protein H (xcpU) from Pseudomonas aeruginosa (strain ATCC 15692 / DSM 22644 / CIP 104116 / JCM 14847 / LMG 12228 / 1C / PRS 101 / PAO1).